A 445-amino-acid polypeptide reads, in one-letter code: MSMTPREIVHELNRHIIGQDDAKRAVAIALRNRWRRMQLPEELRVEVTPKNILMIGPTGVGKTEIARRLAKLANAPFIKVEATKFTEVGYVGRDVESIIRDLADAAIKMLREQEMTRVRHRAEDAAEDRILDALLPPARMGFSNEEAPTQDSNTRQLFRKRLREGQLDDKEIEIEVAEMAGIEIATPPGMEEMTNQLQNLFANMGKGKKKARKLKVKEALKLVRDEEAGRLVNEEELKAKALEAVEQHGIVFIDEIDKVAKRGNVGGADVSREGVQRDLLPLIEGCTVNTKLGMVKTDHILFIASGAFHLSKPSDLVPELQGRLPIRVELKALSPQDFERILSEPHASLTEQYCALLKTEGLNIQFQPEGIKRLAEIAWQVNEKTENIGARRLHTLLERLLEEVSFSAGDLASAHDDKAIQIDAEYVNSHLGELAQNEDLSRYIL.

ATP is bound by residues isoleucine 17, 59-64, aspartate 254, glutamate 319, and arginine 391; that span reads GVGKTE.

This sequence belongs to the ClpX chaperone family. HslU subfamily. A double ring-shaped homohexamer of HslV is capped on each side by a ring-shaped HslU homohexamer. The assembly of the HslU/HslV complex is dependent on binding of ATP.

Its subcellular location is the cytoplasm. Its function is as follows. ATPase subunit of a proteasome-like degradation complex; this subunit has chaperone activity. The binding of ATP and its subsequent hydrolysis by HslU are essential for unfolding of protein substrates subsequently hydrolyzed by HslV. HslU recognizes the N-terminal part of its protein substrates and unfolds these before they are guided to HslV for hydrolysis. The sequence is that of ATP-dependent protease ATPase subunit HslU from Pseudomonas fluorescens (strain Pf0-1).